The primary structure comprises 389 residues: Chitin-binding protein CbpD (389 aa).

An N-terminal signal peptide occupies residues 1–25 (MKHYSATLALLPLTLALFLPQAAHA). The 183-residue stretch at 26-208 (HGSMETPPSR…EAFYACIDVS (183 aa)) folds into the Chitin-binding type-4 domain. Tyr-37 is modified (phosphotyrosine). At Ser-210 the chain carries Phosphoserine.

It localises to the secreted. Its function is as follows. Binds but does not hydrolyze chitin. The sequence is that of Chitin-binding protein CbpD (cpbD) from Pseudomonas aeruginosa (strain UCBPP-PA14).